The chain runs to 213 residues: ATP phosphoribosyltransferase (213 aa).

This sequence belongs to the ATP phosphoribosyltransferase family. Short subfamily. Heteromultimer composed of HisG and HisZ subunits.

Its subcellular location is the cytoplasm. The catalysed reaction is 1-(5-phospho-beta-D-ribosyl)-ATP + diphosphate = 5-phospho-alpha-D-ribose 1-diphosphate + ATP. The protein operates within amino-acid biosynthesis; L-histidine biosynthesis; L-histidine from 5-phospho-alpha-D-ribose 1-diphosphate: step 1/9. In terms of biological role, catalyzes the condensation of ATP and 5-phosphoribose 1-diphosphate to form N'-(5'-phosphoribosyl)-ATP (PR-ATP). Has a crucial role in the pathway because the rate of histidine biosynthesis seems to be controlled primarily by regulation of HisG enzymatic activity. This chain is ATP phosphoribosyltransferase, found in Bacillus pumilus (strain SAFR-032).